A 288-amino-acid polypeptide reads, in one-letter code: Protease HtpX (288 aa).

2 helical membrane-spanning segments follow: residues 5–25 (IALF…VMSL) and 34–54 (SGLL…SLLL). A Zn(2+)-binding site is contributed by H140. E141 is an active-site residue. Residue H144 participates in Zn(2+) binding. The next 2 membrane-spanning stretches (helical) occupy residues 155–175 (LLQG…GGII) and 190–210 (FAYF…ATMI). E219 contributes to the Zn(2+) binding site.

It belongs to the peptidase M48B family. Zn(2+) is required as a cofactor.

Its subcellular location is the cell inner membrane. This Stenotrophomonas maltophilia (strain R551-3) protein is Protease HtpX.